Reading from the N-terminus, the 554-residue chain is Glucose-6-phosphate isomerase 1 (554 aa).

Residue E359 is the Proton donor of the active site. Residues H390 and K518 contribute to the active site.

It belongs to the GPI family.

The protein resides in the cytoplasm. It catalyses the reaction alpha-D-glucose 6-phosphate = beta-D-fructose 6-phosphate. It functions in the pathway carbohydrate biosynthesis; gluconeogenesis. The protein operates within carbohydrate degradation; glycolysis; D-glyceraldehyde 3-phosphate and glycerone phosphate from D-glucose: step 2/4. Its function is as follows. Catalyzes the reversible isomerization of glucose-6-phosphate to fructose-6-phosphate. In Pseudomonas putida (strain ATCC 47054 / DSM 6125 / CFBP 8728 / NCIMB 11950 / KT2440), this protein is Glucose-6-phosphate isomerase 1.